We begin with the raw amino-acid sequence, 303 residues long: Serine/threonine-protein phosphatase PP-X homolog 1 (303 aa).

Mn(2+) contacts are provided by Asp-51, His-53, Asp-79, and Asn-111. The active-site Proton donor is His-112. Positions 161 and 235 each coordinate Mn(2+).

The protein belongs to the PPP phosphatase family. PP-4 (PP-X) subfamily. Mn(2+) serves as cofactor.

It carries out the reaction O-phospho-L-seryl-[protein] + H2O = L-seryl-[protein] + phosphate. It catalyses the reaction O-phospho-L-threonyl-[protein] + H2O = L-threonyl-[protein] + phosphate. This is Serine/threonine-protein phosphatase PP-X homolog 1 (Ppx1) from Paramecium tetraurelia.